We begin with the raw amino-acid sequence, 507 residues long: Chromosomal replication initiator protein DnaA (507 aa).

Positions 1–72 (MNNYNKIWEI…KKITKLKFEE (72 aa)) are domain I, interacts with DnaA modulators. The interval 72-162 (EKIIIEFVSE…KISFNKYNYG (91 aa)) is domain II. The domain III, AAA+ region stretch occupies residues 163–384 (NTNPKYSFDN…GALLRLLNYA (222 aa)). 4 residues coordinate ATP: G207, G209, K210, and T211. The domain IV, binds dsDNA stretch occupies residues 385 to 507 (QTFGYDIDIN…LELILKKINS (123 aa)).

It belongs to the DnaA family. In terms of assembly, oligomerizes as a right-handed, spiral filament on DNA at oriC.

It is found in the cytoplasm. Functionally, plays an essential role in the initiation and regulation of chromosomal replication. ATP-DnaA binds to the origin of replication (oriC) to initiate formation of the DNA replication initiation complex once per cell cycle. Binds the DnaA box (a 9 base pair repeat at the origin) and separates the double-stranded (ds)DNA. Forms a right-handed helical filament on oriC DNA; dsDNA binds to the exterior of the filament while single-stranded (ss)DNA is stabiized in the filament's interior. The ATP-DnaA-oriC complex binds and stabilizes one strand of the AT-rich DNA unwinding element (DUE), permitting loading of DNA polymerase. After initiation quickly degrades to an ADP-DnaA complex that is not apt for DNA replication. Binds acidic phospholipids. This chain is Chromosomal replication initiator protein DnaA, found in Onion yellows phytoplasma (strain OY-M).